Reading from the N-terminus, the 599-residue chain is Translation initiation factor IF-2 (599 aa).

A tr-type G domain is found at 111 to 278 (PRPPIITVMG…SILLLAEILE (168 aa)). A G1 region spans residues 120 to 127 (GHVDHGKT). 120 to 127 (GHVDHGKT) serves as a coordination point for GTP. The G2 stretch occupies residues 145-149 (GITQH). The tract at residues 166–169 (DTPG) is G3. GTP-binding positions include 166–170 (DTPGH) and 220–223 (NKMD). Residues 220–223 (NKMD) form a G4 region. Residues 256–258 (SAL) form a G5 region.

Belongs to the TRAFAC class translation factor GTPase superfamily. Classic translation factor GTPase family. IF-2 subfamily.

Its subcellular location is the cytoplasm. Its function is as follows. One of the essential components for the initiation of protein synthesis. Protects formylmethionyl-tRNA from spontaneous hydrolysis and promotes its binding to the 30S ribosomal subunits. Also involved in the hydrolysis of GTP during the formation of the 70S ribosomal complex. In Mesomycoplasma hyopneumoniae (strain 7448) (Mycoplasma hyopneumoniae), this protein is Translation initiation factor IF-2.